The primary structure comprises 414 residues: MPHEPLNSYRSGPDERGHFGIFGGRFVAETLMPLILDLEKHYALARVDPAFKAELDGLLTHYVGRPSPLYYAERLTEHVRAIAAHAGGRGGAKVYFKREELNHTGAHKINNVLGQILLARRMGKTRIIAETGAGQHGVATATACARFGLECVIYMGAVDVERQKPNVFRMNLLGAKVVPVQSGARTLKDAMNEALRDWVTNVTDTFYCIGTAAGPHPYPAMVRDFQCVIGEETRTQMLEREGRLPDSLFACIGGGSNAIGLFHPFLDEPNVEIYGVEAAGFGLDKQHAASLAGGRPGVLHGNRTYLLMDADGQIEEGHSISAGLDYPGIGPEHAWLKETGRVTYLSARDDEALDAFQLCAKLEGIIPALEPAHALAKVVEVAPSKPRDHLLVVNISGRGDKDIFTVADYLAPVG.

N6-(pyridoxal phosphate)lysine is present on Lys108.

It belongs to the TrpB family. In terms of assembly, tetramer of two alpha and two beta chains. Pyridoxal 5'-phosphate serves as cofactor.

The catalysed reaction is (1S,2R)-1-C-(indol-3-yl)glycerol 3-phosphate + L-serine = D-glyceraldehyde 3-phosphate + L-tryptophan + H2O. It functions in the pathway amino-acid biosynthesis; L-tryptophan biosynthesis; L-tryptophan from chorismate: step 5/5. Functionally, the beta subunit is responsible for the synthesis of L-tryptophan from indole and L-serine. In Beijerinckia indica subsp. indica (strain ATCC 9039 / DSM 1715 / NCIMB 8712), this protein is Tryptophan synthase beta chain.